A 202-amino-acid polypeptide reads, in one-letter code: Putative 3-methyladenine DNA glycosylase (202 aa).

It belongs to the DNA glycosylase MPG family.

The polypeptide is Putative 3-methyladenine DNA glycosylase (Alkaliphilus oremlandii (strain OhILAs) (Clostridium oremlandii (strain OhILAs))).